Here is a 376-residue protein sequence, read N- to C-terminus: E3 ubiquitin-protein ligase RNF133 (376 aa).

One can recognise a PA domain in the interval 65-167 (SSTLKRVAGV…LKGTEIFHLI (103 aa)). Residues 190–210 (YLVSFVIVTTATLAYFIFYHI) traverse the membrane as a helical segment. An RING-type; atypical zinc finger spans residues 256–297 (CVICFEHYKPNDIVRILTCKHFFHKNCIDPWILSHGTCPICK). The segment at 328–376 (TLSPSEEETNNEVSPAGTSDKVIHVEENPTSQNNDSQPHSVVEDVHPSP) is disordered. Residues 355 to 366 (NPTSQNNDSQPH) show a composition bias toward polar residues.

As to quaternary structure, interacts with E3 ligase UBE2J1. In terms of processing, auto-ubiquitinated.

The protein resides in the endoplasmic reticulum membrane. The enzyme catalyses S-ubiquitinyl-[E2 ubiquitin-conjugating enzyme]-L-cysteine + [acceptor protein]-L-lysine = [E2 ubiquitin-conjugating enzyme]-L-cysteine + N(6)-ubiquitinyl-[acceptor protein]-L-lysine.. Its pathway is protein modification; protein ubiquitination. Its function is as follows. Has E3 ubiquitin-protein ligase activity. Plays a role in male fecundity through the interaction with the E2 ubituitin-protein ligase UBE2J1. This Macaca fascicularis (Crab-eating macaque) protein is E3 ubiquitin-protein ligase RNF133 (RNF133).